Reading from the N-terminus, the 659-residue chain is UvrABC system protein B (659 aa).

Positions 25–412 (QSIENGNRGQ…SEIVAEQIIR (388 aa)) constitute a Helicase ATP-binding domain. 38 to 45 (GVTGSGKT) is a binding site for ATP. Positions 91–114 (YYDYYQPEAYVPQTDTFIEKDASI) match the Beta-hairpin motif. A Helicase C-terminal domain is found at 429–582 (QIDDLYGEIQ…QMEYNEEHNI (154 aa)). The 36-residue stretch at 622–657 (EKLIEQYEEEMKEAAKNLQFERAAELRDIIKDLKEN) folds into the UVR domain.

This sequence belongs to the UvrB family. As to quaternary structure, forms a heterotetramer with UvrA during the search for lesions. Interacts with UvrC in an incision complex.

It localises to the cytoplasm. Its function is as follows. The UvrABC repair system catalyzes the recognition and processing of DNA lesions. A damage recognition complex composed of 2 UvrA and 2 UvrB subunits scans DNA for abnormalities. Upon binding of the UvrA(2)B(2) complex to a putative damaged site, the DNA wraps around one UvrB monomer. DNA wrap is dependent on ATP binding by UvrB and probably causes local melting of the DNA helix, facilitating insertion of UvrB beta-hairpin between the DNA strands. Then UvrB probes one DNA strand for the presence of a lesion. If a lesion is found the UvrA subunits dissociate and the UvrB-DNA preincision complex is formed. This complex is subsequently bound by UvrC and the second UvrB is released. If no lesion is found, the DNA wraps around the other UvrB subunit that will check the other stand for damage. The sequence is that of UvrABC system protein B from Clostridium perfringens (strain 13 / Type A).